A 410-amino-acid polypeptide reads, in one-letter code: Probable inactive allantoicase (410 aa).

This sequence belongs to the allantoicase family.

Functionally, the function of this enzyme is unclear as allantoicase activity is not known to exist in mammals. In Macaca fascicularis (Crab-eating macaque), this protein is Probable inactive allantoicase (ALLC).